Consider the following 1576-residue polypeptide: Proton channel OtopLc (1576 aa).

Disordered stretches follow at residues Met1–Pro602 and Gln621–Val736. Low complexity-rich tracts occupy residues Ser58–Val67 and Leu76–Thr85. Composition is skewed to acidic residues over residues Asp103–Pro116, Asp159–Glu171, Ser186–Glu198, and Pro206–Asp216. A compositionally biased stretch (pro residues) spans Thr219–Pro228. Residues Ser229 to Gln241 show a composition bias toward polar residues. An N-linked (GlcNAc...) asparagine glycan is attached at Asn230. Over residues Thr243–Asn252 the composition is skewed to low complexity. Over residues Ser253–Pro264 the composition is skewed to pro residues. Asn267 carries N-linked (GlcNAc...) asparagine glycosylation. Residues Asp316–Pro341 show a composition bias toward acidic residues. The segment covering Ala347–Asp356 has biased composition (basic and acidic residues). The span at Thr362–Ser376 shows a compositional bias: polar residues. Positions His384–Gly393 are enriched in basic and acidic residues. Positions Gln402–Leu419 are enriched in acidic residues. The span at Thr420 to Leu433 shows a compositional bias: basic and acidic residues. Residues Gln434 to Ser457 show a composition bias toward polar residues. Low complexity predominate over residues Ser465–Ser507. 2 stretches are compositionally biased toward polar residues: residues Pro519–Gln534 and Lys545–Gln555. Pro residues predominate over residues Met563–Glu575. Low complexity predominate over residues Ala661–Thr685. The segment covering Ser686–Ser709 has biased composition (basic residues). The helical transmembrane segment at Leu741–Pro761 threads the bilayer. Positions Gly771 to Gly845 are disordered. The span at Arg776–Glu799 shows a compositional bias: polar residues. Residues Asp826–Ser839 show a composition bias toward low complexity. The next 2 membrane-spanning stretches (helical) occupy residues Ala891–Phe911 and Leu931–Gly951. The span at Pro962 to Asp973 shows a compositional bias: polar residues. Positions Pro962–Leu1001 are disordered. 3 helical membrane passes run Gly1019–Phe1039, Leu1051–Phe1071, and Ile1084–Val1104. Asn1121 carries N-linked (GlcNAc...) asparagine glycosylation. The next 7 helical transmembrane spans lie at Phe1179–Trp1199, Phe1239–Ile1259, Val1272–Ile1292, Ile1310–Gly1330, Leu1340–Leu1360, Ile1381–Ser1401, and Phe1412–Tyr1432. The N-linked (GlcNAc...) asparagine glycan is linked to Asn1479. The disordered stretch occupies residues Glu1498–Leu1549. Over residues Gly1503 to Gly1512 the composition is skewed to low complexity. Over residues Ala1513–Gly1528 the composition is skewed to gly residues.

Belongs to the otopetrin family.

The protein localises to the cell membrane. Proton-selective channel that specifically transports protons into cells. Proton-selective channel activity is probably required in cell types that use changes in intracellular pH for cell signaling or to regulate biochemical or developmental processes. The protein is Proton channel OtopLc of Drosophila melanogaster (Fruit fly).